A 350-amino-acid polypeptide reads, in one-letter code: tRNA uridine(34) hydroxylase (350 aa).

Positions 146–240 (DDPDAVFIDM…YARRAREQGL (95 aa)) constitute a Rhodanese domain. Residue cysteine 200 is the Cysteine persulfide intermediate of the active site. Over residues 319 to 328 (RRRRAGRENG) the composition is skewed to basic and acidic residues. The tract at residues 319–350 (RRRRAGRENGNKIFNKSRGRLNSKLSIPDPAE) is disordered.

The protein belongs to the TrhO family.

It catalyses the reaction uridine(34) in tRNA + AH2 + O2 = 5-hydroxyuridine(34) in tRNA + A + H2O. Catalyzes oxygen-dependent 5-hydroxyuridine (ho5U) modification at position 34 in tRNAs. In Salmonella agona (strain SL483), this protein is tRNA uridine(34) hydroxylase.